Consider the following 190-residue polypeptide: Xanthine phosphoribosyltransferase (190 aa).

Positions 20 and 27 each coordinate xanthine. Residue 128–132 (ANGKA) coordinates 5-phospho-alpha-D-ribose 1-diphosphate. Lys156 is a xanthine binding site.

This sequence belongs to the purine/pyrimidine phosphoribosyltransferase family. Xpt subfamily. In terms of assembly, homodimer.

The protein resides in the cytoplasm. The enzyme catalyses XMP + diphosphate = xanthine + 5-phospho-alpha-D-ribose 1-diphosphate. It participates in purine metabolism; XMP biosynthesis via salvage pathway; XMP from xanthine: step 1/1. Converts the preformed base xanthine, a product of nucleic acid breakdown, to xanthosine 5'-monophosphate (XMP), so it can be reused for RNA or DNA synthesis. This chain is Xanthine phosphoribosyltransferase, found in Ruminiclostridium cellulolyticum (strain ATCC 35319 / DSM 5812 / JCM 6584 / H10) (Clostridium cellulolyticum).